The chain runs to 291 residues: T-cell leukemia homeobox protein 3 (291 aa).

Positions 1 to 51 (MEAPASAQTPHPHEPISFGIDQILNSPDQDSAPAPRGPDGASYLGGPPGGR) are disordered. The homeobox DNA-binding region spans 166 to 225 (RKKPRTSFSRVQICELEKRFHRQKYLASAERAALAKSLKMTDAQVKTWFQNRRTKWRRQT).

It is found in the nucleus. The chain is T-cell leukemia homeobox protein 3 (Tlx3) from Mus musculus (Mouse).